Reading from the N-terminus, the 1066-residue chain is FHIP family protein GI14169 (1066 aa).

Residues 1-11 (MSWLRTSPLRQ) are compositionally biased toward polar residues. The tract at residues 1-35 (MSWLRTSPLRQSLTRSGSSSGNGSSGTATTMRQRP) is disordered. Low complexity predominate over residues 12–30 (SLTRSGSSSGNGSSGTATT). S500 is modified (phosphoserine). Residues 651–682 (GIDVTTTTTASASDTDLEHNNNSSSISSGRRD) form a disordered region. A compositionally biased stretch (low complexity) spans 655–678 (TTTTTASASDTDLEHNNNSSSISS). Position 820 is a phosphoserine (S820). 2 disordered regions span residues 821-913 (PLHQ…GNSA) and 935-1007 (SGGE…TGNF). The span at 822–855 (LHQQLQHQQQHQQLAQTNSHTQQQQQQQQQQAQQ) shows a compositional bias: low complexity. Residues 856–874 (RSTYATLSAATPVQASPTS) show a composition bias toward polar residues. The segment covering 890 to 913 (SRSITSMFSRRSTSSTPASNGNSA) has biased composition (low complexity). Residues 947–971 (QDSTRGNTCETSLSTAPRQEPQTNV) show a composition bias toward polar residues. Residues 972 to 997 (GSSSNSSIGSSTQTLSGTHSSSTLHG) are compositionally biased toward low complexity.

Belongs to the FHIP family.

The sequence is that of FHIP family protein GI14169 from Drosophila mojavensis (Fruit fly).